Reading from the N-terminus, the 837-residue chain is CoA-transferase/lyase DddD (837 aa).

Asp602 acts as the Nucleophile in catalysis.

Belongs to the CoA-transferase III family.

Functionally, dimethyl sulfide (DMS)-producing enzyme. Acts both as a transferase and a lyase: uses acetyl-coenzyme A (acetyl-coA) and dimethylsulfoniopropionate (DMSP) as substrates to produce DMS, acetate and 3-hydroxypropionate-CoA (3HP-CoA). Mediates the CoA-transferase prior to lyase activity. DMS is the principal form by which sulfur is transported from oceans to the atmosphere and is a key component of the ocean sulfur cycle. The chain is CoA-transferase/lyase DddD from Marinomonas sp. (strain MWYL1).